Here is a 263-residue protein sequence, read N- to C-terminus: Phosphatidylglycerol--prolipoprotein diacylglyceryl transferase (263 aa).

The next 4 membrane-spanning stretches (helical) occupy residues 10-30, 56-76, 91-111, and 117-137; these read VAIT…LFGF, MVTY…ILFY, IWNG…AMWL, and GLGF…GLFF. Arg139 serves as a coordination point for a 1,2-diacyl-sn-glycero-3-phospho-(1'-sn-glycerol). Transmembrane regions (helical) follow at residues 171 to 191, 199 to 219, and 231 to 251; these read PSQL…LWVF, GHVS…VEFV, and FGWL…GLWL.

This sequence belongs to the Lgt family.

It is found in the cell inner membrane. It carries out the reaction L-cysteinyl-[prolipoprotein] + a 1,2-diacyl-sn-glycero-3-phospho-(1'-sn-glycerol) = an S-1,2-diacyl-sn-glyceryl-L-cysteinyl-[prolipoprotein] + sn-glycerol 1-phosphate + H(+). The protein operates within protein modification; lipoprotein biosynthesis (diacylglyceryl transfer). In terms of biological role, catalyzes the transfer of the diacylglyceryl group from phosphatidylglycerol to the sulfhydryl group of the N-terminal cysteine of a prolipoprotein, the first step in the formation of mature lipoproteins. The sequence is that of Phosphatidylglycerol--prolipoprotein diacylglyceryl transferase from Nitratidesulfovibrio vulgaris (strain DP4) (Desulfovibrio vulgaris).